The following is a 316-amino-acid chain: Type II restriction enzyme BsuBI (316 aa).

This sequence belongs to the BsuBI/PstI type II restriction endonuclease family. In terms of assembly, homodimer. Mg(2+) serves as cofactor.

It catalyses the reaction Endonucleolytic cleavage of DNA to give specific double-stranded fragments with terminal 5'-phosphates.. Its function is as follows. A P subtype restriction enzyme that recognizes the double-stranded sequence 5'-CTGCAG-3' and cleaves after A-5. This Bacillus subtilis protein is Type II restriction enzyme BsuBI (hsdBR).